The following is a 153-amino-acid chain: Transcription antitermination protein NusB (153 aa).

Belongs to the NusB family.

Involved in transcription antitermination. Required for transcription of ribosomal RNA (rRNA) genes. Binds specifically to the boxA antiterminator sequence of the ribosomal RNA (rrn) operons. The chain is Transcription antitermination protein NusB from Nitratidesulfovibrio vulgaris (strain ATCC 29579 / DSM 644 / CCUG 34227 / NCIMB 8303 / VKM B-1760 / Hildenborough) (Desulfovibrio vulgaris).